The chain runs to 364 residues: Spermidine/putrescine import ATP-binding protein PotA (364 aa).

The 231-residue stretch at 5 to 235 (LSFKDVSKGF…PVNRFVADFI (231 aa)) folds into the ABC transporter domain. Residue 37–44 (GPSGCGKT) coordinates ATP.

The protein belongs to the ABC transporter superfamily. Spermidine/putrescine importer (TC 3.A.1.11.1) family. As to quaternary structure, the complex is composed of two ATP-binding proteins (PotA), two transmembrane proteins (PotB and PotC) and a solute-binding protein (PotD).

The protein localises to the cell membrane. It catalyses the reaction ATP + H2O + polyamine-[polyamine-binding protein]Side 1 = ADP + phosphate + polyamineSide 2 + [polyamine-binding protein]Side 1.. Functionally, part of the ABC transporter complex PotABCD involved in spermidine/putrescine import. Responsible for energy coupling to the transport system. The chain is Spermidine/putrescine import ATP-binding protein PotA from Staphylococcus epidermidis (strain ATCC 12228 / FDA PCI 1200).